The chain runs to 212 residues: Ras-related protein Rab-15 (212 aa).

Positions 17, 18, 19, 20, 21, 22, 23, 35, 39, and 40 each coordinate GTP. Position 22 (T22) interacts with Mg(2+). 2 consecutive short sequence motifs (switch) follow at residues 31–45 (NEFH…GVDF) and 63–80 (DTAG…YYRR). 2 residues coordinate Mg(2+): T40 and D63. GTP-binding residues include G66, N121, K122, D124, S151, and A152. The interval 192 to 212 (ELEEDEGKPEGPANSSKTCWC) is disordered. S-geranylgeranyl cysteine attachment occurs at residues C210 and C212. C212 carries the post-translational modification Cysteine methyl ester.

It belongs to the small GTPase superfamily. Rab family. In terms of assembly, the GTP bound form of RAB15 interacts with REP15. Interacts (GTP-bound form) with MICAL1, MICAL3, MICALCL, EHBP1 and EHBP1L1. Requires Mg(2+) as cofactor.

It localises to the cell membrane. It carries out the reaction GTP + H2O = GDP + phosphate + H(+). Its activity is regulated as follows. Regulated by guanine nucleotide exchange factors (GEFs) which promote the exchange of bound GDP for free GTP. Regulated by GTPase activating proteins (GAPs) which increase the GTP hydrolysis activity. Inhibited by GDP dissociation inhibitors (GDIs). The small GTPases Rab are key regulators of intracellular membrane trafficking, from the formation of transport vesicles to their fusion with membranes. Rabs cycle between an inactive GDP-bound form and an active GTP-bound form that is able to recruit to membranes different sets of downstream effectors directly responsible for vesicle formation, movement, tethering and fusion. RAB15 may act in concert with RAB3A in regulating aspects of synaptic vesicle membrane flow within the nerve terminal. This is Ras-related protein Rab-15 from Mus musculus (Mouse).